Reading from the N-terminus, the 185-residue chain is uncharacterized protein (185 aa).

A disordered region spans residues 160-185 (QYTGPAVPSVPTTNLNDIGDPTKTVQ).

This is an uncharacterized protein from Saccharomyces cerevisiae (strain ATCC 204508 / S288c) (Baker's yeast).